The chain runs to 374 residues: Ribosomal RNA large subunit methyltransferase G (374 aa).

Belongs to the methyltransferase superfamily. RlmG family.

It localises to the cytoplasm. The enzyme catalyses guanosine(1835) in 23S rRNA + S-adenosyl-L-methionine = N(2)-methylguanosine(1835) in 23S rRNA + S-adenosyl-L-homocysteine + H(+). Functionally, specifically methylates the guanine in position 1835 (m2G1835) of 23S rRNA. This chain is Ribosomal RNA large subunit methyltransferase G, found in Pseudomonas fluorescens (strain ATCC BAA-477 / NRRL B-23932 / Pf-5).